The following is a 254-amino-acid chain: Segregation and condensation protein A (254 aa).

It belongs to the ScpA family. Component of a cohesin-like complex composed of ScpA, ScpB and the Smc homodimer, in which ScpA and ScpB bind to the head domain of Smc. The presence of the three proteins is required for the association of the complex with DNA.

The protein resides in the cytoplasm. Its function is as follows. Participates in chromosomal partition during cell division. May act via the formation of a condensin-like complex containing Smc and ScpB that pull DNA away from mid-cell into both cell halves. In Clostridium tetani (strain Massachusetts / E88), this protein is Segregation and condensation protein A.